A 78-amino-acid polypeptide reads, in one-letter code: Small ribosomal subunit protein bS18c (78 aa).

Belongs to the bacterial ribosomal protein bS18 family. As to quaternary structure, part of the 30S ribosomal subunit.

It is found in the plastid. The protein localises to the chloroplast. This Oltmannsiellopsis viridis (Marine flagellate) protein is Small ribosomal subunit protein bS18c.